A 277-amino-acid polypeptide reads, in one-letter code: Urease accessory protein UreD (277 aa).

Belongs to the UreD family. In terms of assembly, ureD, UreF and UreG form a complex that acts as a GTP-hydrolysis-dependent molecular chaperone, activating the urease apoprotein by helping to assemble the nickel containing metallocenter of UreC. The UreE protein probably delivers the nickel.

The protein localises to the cytoplasm. In terms of biological role, required for maturation of urease via the functional incorporation of the urease nickel metallocenter. In Pseudomonas putida (strain W619), this protein is Urease accessory protein UreD.